We begin with the raw amino-acid sequence, 404 residues long: Zinc finger CCCH domain-containing protein 15 homolog (404 aa).

Residues 1 to 10 (MPPKKAPPGP) are compositionally biased toward pro residues. The disordered stretch occupies residues 1-71 (MPPKKAPPGP…KRKEEKEKKL (71 aa)). Residues 12-28 (KKTEQKKKEKVIEDKTF) show a composition bias toward basic and acidic residues. The segment covering 38-50 (QQKFIQQVQKQVQ) has biased composition (low complexity). Residues 56–71 (PRQDGDKRKEEKEKKL) show a composition bias toward basic and acidic residues. C3H1-type zinc fingers lie at residues 94–121 (DPKS…HDLS) and 165–202 (PTTD…HALP). At T218 the chain carries Phosphothreonine. At S221 the chain carries Phosphoserine. A coiled-coil region spans residues 246 to 270 (LAWKKRKIAEKKAKLAAEEERKKSD). Low complexity-rich tracts occupy residues 352–361 (EAAKTAAAED) and 369–380 (PSSSAPANDAAP). A disordered region spans residues 352-380 (EAAKTAAAEDAAADEDGPSSSAPANDAAP).

This sequence belongs to the ZC3H15/TMA46 family.

The sequence is that of Zinc finger CCCH domain-containing protein 15 homolog from Drosophila melanogaster (Fruit fly).